Consider the following 147-residue polypeptide: Large ribosomal subunit protein uL15 (147 aa).

The tract at residues 1 to 42 is disordered; that stretch reads MTIKLHHLRPAPGAKTDKTRVGRGEGSKGKTAGRGTKGTKAR. Residues 15 to 28 show a composition bias toward basic and acidic residues; it reads KTDKTRVGRGEGSK.

Belongs to the universal ribosomal protein uL15 family. In terms of assembly, part of the 50S ribosomal subunit.

Its function is as follows. Binds to the 23S rRNA. The protein is Large ribosomal subunit protein uL15 of Nocardia farcinica (strain IFM 10152).